A 612-amino-acid chain; its full sequence is Anaerobic magnesium-protoporphyrin IX monomethyl ester cyclase (612 aa).

In terms of domain architecture, B12-binding spans 9–143 (NYHSGGAEIA…KAYEADNFAE (135 aa)). The region spanning 190–417 (PLGVRVAIPN…MKPKALTRGE (228 aa)) is the Radical SAM core domain. [4Fe-4S] cluster-binding residues include Cys204, Cys208, and Cys211.

It belongs to the BchE family. It depends on [4Fe-4S] cluster as a cofactor. Requires adenosylcob(III)alamin as cofactor.

It carries out the reaction Mg-protoporphyrin IX 13-monomethyl ester + 3 S-adenosyl-L-methionine + H2O = 3,8-divinyl protochlorophyllide a + 3 5'-deoxyadenosine + 3 L-methionine + 4 H(+). It participates in porphyrin-containing compound metabolism; bacteriochlorophyll biosynthesis (light-independent). In terms of biological role, involved in the tetrapyrrole biosynthetic pathways leading to chlorophyll and bacteriochlorophyll (BChl). Catalyzes the anaerobic formation of the isocyclic ring (E-ring) in Mg-protoporphyrin monomethyl ester (MPE) to yield protochlorophyllide a (PChlide a) via a six-electron oxidation and the formation of an oxo group at position C13 using oxygen from a water molecule. In Cereibacter sphaeroides (strain ATCC 17023 / DSM 158 / JCM 6121 / CCUG 31486 / LMG 2827 / NBRC 12203 / NCIMB 8253 / ATH 2.4.1.) (Rhodobacter sphaeroides), this protein is Anaerobic magnesium-protoporphyrin IX monomethyl ester cyclase.